Reading from the N-terminus, the 88-residue chain is Large ribosomal subunit protein bL31B (88 aa).

It belongs to the bacterial ribosomal protein bL31 family. Type B subfamily. As to quaternary structure, part of the 50S ribosomal subunit.

The chain is Large ribosomal subunit protein bL31B from Janthinobacterium sp. (strain Marseille) (Minibacterium massiliensis).